The sequence spans 347 residues: Heat-inducible transcription repressor HrcA (347 aa).

The protein belongs to the HrcA family.

Negative regulator of class I heat shock genes (grpE-dnaK-dnaJ and groELS operons). Prevents heat-shock induction of these operons. This is Heat-inducible transcription repressor HrcA from Lactobacillus delbrueckii subsp. bulgaricus (strain ATCC BAA-365 / Lb-18).